A 389-amino-acid chain; its full sequence is Endonuclease 8-like 1 (389 aa).

The active-site Schiff-base intermediate with DNA is the Pro-2. Glu-3 acts as the Proton donor in catalysis. The Proton donor; for beta-elimination activity role is filled by Lys-54. Asn-176 is a binding site for DNA. The interval 278–389 (TIWFQGDPGP…PREAGESSAS (112 aa)) is disordered. Positions 322–333 (SRMRRARKHPPK) are enriched in basic residues. The span at 336-351 (AQQSEGAGLQQNQETP) shows a compositional bias: polar residues. The span at 357 to 373 (GKRRGQRASTGHRRRPK) shows a compositional bias: basic residues. The segment covering 374–389 (TIPDTRPREAGESSAS) has biased composition (basic and acidic residues).

It belongs to the FPG family. Detected in heart, spleen and lung.

It is found in the cytoplasm. Its subcellular location is the cytoskeleton. The protein resides in the microtubule organizing center. It localises to the centrosome. The protein localises to the nucleus. It is found in the chromosome. It carries out the reaction 2'-deoxyribonucleotide-(2'-deoxyribose 5'-phosphate)-2'-deoxyribonucleotide-DNA = a 3'-end 2'-deoxyribonucleotide-(2,3-dehydro-2,3-deoxyribose 5'-phosphate)-DNA + a 5'-end 5'-phospho-2'-deoxyribonucleoside-DNA + H(+). Its function is as follows. Involved in base excision repair of DNA damaged by oxidation or by mutagenic agents. Acts as a DNA glycosylase that recognizes and removes damaged bases. Has a preference for oxidized pyrimidines, such as thymine glycol, formamidopyrimidine (Fapy) and 5-hydroxyuracil. Has marginal activity towards 8-oxoguanine. Has AP (apurinic/apyrimidinic) lyase activity and introduces nicks in the DNA strand. Cleaves the DNA backbone by beta-delta elimination to generate a single-strand break at the site of the removed base with both 3'- and 5'-phosphates. Has DNA glycosylase/lyase activity towards mismatched uracil and thymine, in particular in U:C and T:C mismatches. Specifically binds 5-hydroxymethylcytosine (5hmC), suggesting that it acts as a specific reader of 5hmC. The polypeptide is Endonuclease 8-like 1 (Neil1) (Mus musculus (Mouse)).